Consider the following 130-residue polypeptide: Small ribosomal subunit protein uS8 (130 aa).

The protein belongs to the universal ribosomal protein uS8 family. Part of the 30S ribosomal subunit. Contacts proteins S5 and S12.

One of the primary rRNA binding proteins, it binds directly to 16S rRNA central domain where it helps coordinate assembly of the platform of the 30S subunit. The chain is Small ribosomal subunit protein uS8 from Buchnera aphidicola subsp. Cinara cedri (strain Cc).